The chain runs to 361 residues: Peptide chain release factor 1 (361 aa).

Q235 is subject to N5-methylglutamine.

It belongs to the prokaryotic/mitochondrial release factor family. In terms of processing, methylated by PrmC. Methylation increases the termination efficiency of RF1.

The protein localises to the cytoplasm. Its function is as follows. Peptide chain release factor 1 directs the termination of translation in response to the peptide chain termination codons UAG and UAA. This is Peptide chain release factor 1 from Xanthomonas campestris pv. campestris (strain 8004).